Reading from the N-terminus, the 155-residue chain is Ribosomal RNA large subunit methyltransferase H (155 aa).

Residues Leu-72, Gly-103, and 122–127 (LSALTL) contribute to the S-adenosyl-L-methionine site.

This sequence belongs to the RNA methyltransferase RlmH family. In terms of assembly, homodimer.

The protein resides in the cytoplasm. The catalysed reaction is pseudouridine(1915) in 23S rRNA + S-adenosyl-L-methionine = N(3)-methylpseudouridine(1915) in 23S rRNA + S-adenosyl-L-homocysteine + H(+). Its function is as follows. Specifically methylates the pseudouridine at position 1915 (m3Psi1915) in 23S rRNA. The chain is Ribosomal RNA large subunit methyltransferase H from Cronobacter sakazakii (strain ATCC BAA-894) (Enterobacter sakazakii).